A 460-amino-acid chain; its full sequence is Bifunctional protein GlmU (460 aa).

A pyrophosphorylase region spans residues 1 to 229; sequence MKNYAIILAA…FDESLGVNDR (229 aa). UDP-N-acetyl-alpha-D-glucosamine is bound by residues 8–11, Lys22, Gln72, and 77–78; these read LAAG and GT. Asp102 contributes to the Mg(2+) binding site. 4 residues coordinate UDP-N-acetyl-alpha-D-glucosamine: Gly139, Glu154, Asn169, and Asn227. Residue Asn227 participates in Mg(2+) binding. A linker region spans residues 230–250; the sequence is LALAQAEVIMQERINKQHMLN. The N-acetyltransferase stretch occupies residues 251–460; it reads GVTLQNPAAT…RLPHHPDQPQ (210 aa). Positions 332 and 350 each coordinate UDP-N-acetyl-alpha-D-glucosamine. The active-site Proton acceptor is the His362. Residues Tyr365 and Asn376 each contribute to the UDP-N-acetyl-alpha-D-glucosamine site. Acetyl-CoA-binding positions include Ala379, 385–386, Ser404, Ala422, and Arg439; that span reads NY.

It in the N-terminal section; belongs to the N-acetylglucosamine-1-phosphate uridyltransferase family. In the C-terminal section; belongs to the transferase hexapeptide repeat family. In terms of assembly, homotrimer. Mg(2+) serves as cofactor.

It is found in the cytoplasm. It catalyses the reaction alpha-D-glucosamine 1-phosphate + acetyl-CoA = N-acetyl-alpha-D-glucosamine 1-phosphate + CoA + H(+). It carries out the reaction N-acetyl-alpha-D-glucosamine 1-phosphate + UTP + H(+) = UDP-N-acetyl-alpha-D-glucosamine + diphosphate. The protein operates within nucleotide-sugar biosynthesis; UDP-N-acetyl-alpha-D-glucosamine biosynthesis; N-acetyl-alpha-D-glucosamine 1-phosphate from alpha-D-glucosamine 6-phosphate (route II): step 2/2. It participates in nucleotide-sugar biosynthesis; UDP-N-acetyl-alpha-D-glucosamine biosynthesis; UDP-N-acetyl-alpha-D-glucosamine from N-acetyl-alpha-D-glucosamine 1-phosphate: step 1/1. It functions in the pathway bacterial outer membrane biogenesis; LPS lipid A biosynthesis. Functionally, catalyzes the last two sequential reactions in the de novo biosynthetic pathway for UDP-N-acetylglucosamine (UDP-GlcNAc). The C-terminal domain catalyzes the transfer of acetyl group from acetyl coenzyme A to glucosamine-1-phosphate (GlcN-1-P) to produce N-acetylglucosamine-1-phosphate (GlcNAc-1-P), which is converted into UDP-GlcNAc by the transfer of uridine 5-monophosphate (from uridine 5-triphosphate), a reaction catalyzed by the N-terminal domain. This chain is Bifunctional protein GlmU, found in Streptococcus equi subsp. zooepidemicus (strain ATCC 35246 / C74-63).